We begin with the raw amino-acid sequence, 136 residues long: Small ribosomal subunit protein eS19 (136 aa).

Lysine 23 is modified (N6-acetyllysine). Arginine 67 is subject to Omega-N-methylarginine. An N6-acetyllysine mark is found at lysine 111 and lysine 115. The disordered stretch occupies residues 116-136 (DQDGGRKLTPQGQRDLDRIAG).

Belongs to the eukaryotic ribosomal protein eS19 family. Component of the small ribosomal subunit. Part of the small subunit (SSU) processome, composed of more than 70 proteins and the RNA chaperone small nucleolar RNA (snoRNA) U3. Interacts with RPS19BP1; the interaction is direct and mediates the integration of RPS19 in state post-A1. Interacts with RPS19BP1.

Its subcellular location is the cytoplasm. It is found in the nucleus. It localises to the nucleolus. Component of the small ribosomal subunit. The ribosome is a large ribonucleoprotein complex responsible for the synthesis of proteins in the cell. Required for pre-rRNA processing and maturation of 40S ribosomal subunits. Part of the small subunit (SSU) processome, first precursor of the small eukaryotic ribosomal subunit. During the assembly of the SSU processome in the nucleolus, many ribosome biogenesis factors, an RNA chaperone and ribosomal proteins associate with the nascent pre-rRNA and work in concert to generate RNA folding, modifications, rearrangements and cleavage as well as targeted degradation of pre-ribosomal RNA by the RNA exosome. In Sus scrofa (Pig), this protein is Small ribosomal subunit protein eS19 (RPS19).